A 179-amino-acid polypeptide reads, in one-letter code: Ubiquitin-conjugating enzyme E2 C (179 aa).

The segment covering 1 to 14 (MASQNRDPAATSVT) has biased composition (polar residues). The disordered stretch occupies residues 1 to 31 (MASQNRDPAATSVTAARKGAEPSGGAARGPV). Alanine 2 carries the post-translational modification N-acetylalanine. Serine 3 carries the phosphoserine modification. Positions 30–175 (PVGKRLQQEL…LQETYSKQVT (146 aa)) constitute a UBC core domain. The active-site Glycyl thioester intermediate is the cysteine 114.

The protein belongs to the ubiquitin-conjugating enzyme family. In terms of assembly, component of the APC/C complex, composed of at least 14 distinct subunits that assemble into a complex of at least 19 chains with a combined molecular mass of around 1.2 MDa. Within this complex, directly interacts with ANAPC2. Post-translationally, autoubiquitinated by the APC/C complex, leading to its degradation by the proteasome. Its degradation plays a central role in APC/C regulation, allowing cyclin-A accumulation before S phase entry. APC/C substrates inhibit the autoubiquitination of UBE2C/UBCH10 but not its E2 function, hence APC/C remaining active until its substrates have been destroyed.

The catalysed reaction is S-ubiquitinyl-[E1 ubiquitin-activating enzyme]-L-cysteine + [E2 ubiquitin-conjugating enzyme]-L-cysteine = [E1 ubiquitin-activating enzyme]-L-cysteine + S-ubiquitinyl-[E2 ubiquitin-conjugating enzyme]-L-cysteine.. It catalyses the reaction S-ubiquitinyl-[E1 ubiquitin-activating enzyme]-L-cysteine + [acceptor protein]-L-lysine = [E1 ubiquitin-activating enzyme]-L-cysteine + N(6)-monoubiquitinyl-[acceptor protein]-L-lysine.. Its pathway is protein modification; protein ubiquitination. In terms of biological role, accepts ubiquitin from the E1 complex and catalyzes its covalent attachment to other proteins. In vitro catalyzes 'Lys-11'- and 'Lys-48'-linked polyubiquitination. Acts as an essential factor of the anaphase promoting complex/cyclosome (APC/C), a cell cycle-regulated ubiquitin ligase that controls progression through mitosis. Acts by initiating 'Lys-11'-linked polyubiquitin chains on APC/C substrates, leading to the degradation of APC/C substrates by the proteasome and promoting mitotic exit. In Macaca fascicularis (Crab-eating macaque), this protein is Ubiquitin-conjugating enzyme E2 C (UBE2C).